A 539-amino-acid chain; its full sequence is Membrane protein insertase YidC (539 aa).

Helical transmembrane passes span 6-26 (TLLV…WQVA), 341-361 (SVIQ…TFIV), 416-436 (LGGC…YWAL), 454-474 (LSAQ…MFLI), and 495-515 (PVMF…YWLV).

The protein belongs to the OXA1/ALB3/YidC family. Type 1 subfamily. As to quaternary structure, interacts with the Sec translocase complex via SecD. Specifically interacts with transmembrane segments of nascent integral membrane proteins during membrane integration.

The protein resides in the cell inner membrane. Required for the insertion and/or proper folding and/or complex formation of integral membrane proteins into the membrane. Involved in integration of membrane proteins that insert both dependently and independently of the Sec translocase complex, as well as at least some lipoproteins. Aids folding of multispanning membrane proteins. The polypeptide is Membrane protein insertase YidC (Vibrio vulnificus (strain CMCP6)).